A 227-amino-acid polypeptide reads, in one-letter code: UPF0173 metal-dependent hydrolase BT9727_4343 (227 aa).

The protein belongs to the UPF0173 family.

In Bacillus thuringiensis subsp. konkukian (strain 97-27), this protein is UPF0173 metal-dependent hydrolase BT9727_4343.